A 291-amino-acid polypeptide reads, in one-letter code: Secretory carrier-associated membrane protein 5 (291 aa).

The span at methionine 1–phenylalanine 10 shows a compositional bias: basic and acidic residues. The segment at methionine 1 to lysine 66 is disordered. At methionine 1 to glutamine 126 the chain is on the cytoplasmic side. Serine 34 is modified (phosphoserine). The stretch at serine 58–alanine 94 forms a coiled coil. A run of 4 helical transmembrane segments spans residues tyrosine 127 to valine 147, isoleucine 159 to tyrosine 179, phenylalanine 194 to alanine 214, and isoleucine 242 to isoleucine 262. The Cytoplasmic portion of the chain corresponds to glutamine 263–arginine 288.

Belongs to the SCAMP family.

It is found in the cell membrane. It localises to the cytoplasmic vesicle. The protein localises to the secretory vesicle membrane. In terms of biological role, probably involved in membrane trafficking. The polypeptide is Secretory carrier-associated membrane protein 5 (SCAMP5) (Arabidopsis thaliana (Mouse-ear cress)).